A 374-amino-acid polypeptide reads, in one-letter code: Cobalt-precorrin-5B C(1)-methyltransferase (374 aa).

It belongs to the CbiD family.

The enzyme catalyses Co-precorrin-5B + S-adenosyl-L-methionine = Co-precorrin-6A + S-adenosyl-L-homocysteine. Its pathway is cofactor biosynthesis; adenosylcobalamin biosynthesis; cob(II)yrinate a,c-diamide from sirohydrochlorin (anaerobic route): step 6/10. Its function is as follows. Catalyzes the methylation of C-1 in cobalt-precorrin-5B to form cobalt-precorrin-6A. This Synechococcus elongatus (strain ATCC 33912 / PCC 7942 / FACHB-805) (Anacystis nidulans R2) protein is Cobalt-precorrin-5B C(1)-methyltransferase.